Here is a 41-residue protein sequence, read N- to C-terminus: U-AITX-Bg1a (41 aa).

3 cysteine pairs are disulfide-bonded: Cys-2-Cys-35, Cys-4-Cys-28, and Cys-18-Cys-36.

This sequence belongs to the sea anemone type 3 (BDS) potassium channel toxin family.

It localises to the secreted. The protein resides in the nematocyst. Potently and selectively inhibits voltage-gated potassium channels Kv11/KCNH/ERG. Acts as a gating-modifier toxin that shifts the voltage-dependence of ERG activation in the positive direction and suppresses its current amplitudes elicited by strong depolarizing pulses that maximally activate the channels. The chain is U-AITX-Bg1a from Bunodosoma granuliferum (Red warty sea anemone).